Reading from the N-terminus, the 254-residue chain is Nodulation protein J (254 aa).

A run of 6 helical transmembrane segments spans residues 25 to 45, 60 to 80, 106 to 126, 133 to 153, 169 to 189, and 230 to 250; these read ASVL…GVGL, FLAC…EMLY, LIGE…IVAV, YIPG…ALIF, LFAF…GVIV, and LLLS…VICV. The region spanning 25–251 is the ABC transmembrane type-2 domain; it reads ASVLGSVIDP…FISAKVICVR (227 aa).

The protein belongs to the ABC-2 integral membrane protein family. Lipooligosaccharide exporter (TC 3.A.1.102) subfamily. As to quaternary structure, the complex is composed of two ATP-binding proteins (NodI) and two transmembrane proteins (NodJ).

The protein resides in the cell inner membrane. Part of the ABC transporter complex NodIJ involved in the export of the nodulation factors (Nod factors), the bacterial signal molecules that induce symbiosis and subsequent nodulation induction. Nod factors are LCO (lipo-chitin oligosaccharide), a modified beta-1,4-linked N-acetylglucosamine oligosaccharide. This subunit encodes the transporter. This chain is Nodulation protein J (nodJ), found in Azorhizobium caulinodans (strain ATCC 43989 / DSM 5975 / JCM 20966 / LMG 6465 / NBRC 14845 / NCIMB 13405 / ORS 571).